Here is a 235-residue protein sequence, read N- to C-terminus: Secreted RxLR effector protein 27 (235 aa).

Residues 1–25 (MTNLFTRHTRRSLTALALLSGGVYA) form the signal peptide. The RxLR-dEER motif lies at 36 to 60 (RSLRVFVTGGQVLWDYRIHFKGIER).

Belongs to the RxLR effector family.

It is found in the secreted. The protein localises to the host cytoplasm. The protein resides in the host nucleus. In terms of biological role, effector that acts as a broad suppressor of cell death to interrupt plant immunity. Inhibits cell death induced by cell death-inducing proteins, including the PAMP elicitor INF1 from P.infestans. The protein is Secreted RxLR effector protein 27 of Plasmopara viticola (Downy mildew of grapevine).